Consider the following 460-residue polypeptide: GTPase Der (460 aa).

EngA-type G domains are found at residues 3–167 and 189–364; these read FTFA…PEPD and IRVA…AVWN. GTP-binding positions include 9 to 16, 56 to 60, 119 to 122, 195 to 202, 242 to 246, and 307 to 310; these read GRPNVGKS, DTAGL, NKSE, GRPNAGKS, and NKWD. A KH-like domain is found at 365 to 449; it reads TRVPTAALNR…PVRIMLREKA (85 aa).

It belongs to the TRAFAC class TrmE-Era-EngA-EngB-Septin-like GTPase superfamily. EngA (Der) GTPase family. In terms of assembly, associates with the 50S ribosomal subunit.

Its function is as follows. GTPase that plays an essential role in the late steps of ribosome biogenesis. The sequence is that of GTPase Der from Rhodopseudomonas palustris (strain BisB5).